Reading from the N-terminus, the 181-residue chain is Adenine phosphoribosyltransferase (181 aa).

The protein belongs to the purine/pyrimidine phosphoribosyltransferase family. In terms of assembly, homodimer.

Its subcellular location is the cytoplasm. The enzyme catalyses AMP + diphosphate = 5-phospho-alpha-D-ribose 1-diphosphate + adenine. Its pathway is purine metabolism; AMP biosynthesis via salvage pathway; AMP from adenine: step 1/1. Its function is as follows. Catalyzes a salvage reaction resulting in the formation of AMP, that is energically less costly than de novo synthesis. The protein is Adenine phosphoribosyltransferase of Rhizobium leguminosarum bv. trifolii (strain WSM2304).